Here is a 209-residue protein sequence, read N- to C-terminus: Superoxide dismutase [Mn/Fe] (209 aa).

The Fe(3+) site is built by His-38, His-90, Asp-172, and His-176. 4 residues coordinate Mn(2+): His-38, His-90, Asp-172, and His-176.

Belongs to the iron/manganese superoxide dismutase family. Requires Mn(2+) as cofactor. The cofactor is Fe(3+).

It carries out the reaction 2 superoxide + 2 H(+) = H2O2 + O2. Destroys superoxide anion radicals which are normally produced within the cells and which are toxic to biological systems. Catalyzes the dismutation of superoxide anion radicals into O2 and H2O2 by successive reduction and oxidation of the transition metal ion at the active site. This chain is Superoxide dismutase [Mn/Fe] (sodB), found in Rickettsia conorii (strain ATCC VR-613 / Malish 7).